The primary structure comprises 490 residues: Aspartyl/glutamyl-tRNA(Asn/Gln) amidotransferase subunit B (490 aa).

Belongs to the GatB/GatE family. GatB subfamily. Heterotrimer of A, B and C subunits.

It catalyses the reaction L-glutamyl-tRNA(Gln) + L-glutamine + ATP + H2O = L-glutaminyl-tRNA(Gln) + L-glutamate + ADP + phosphate + H(+). The enzyme catalyses L-aspartyl-tRNA(Asn) + L-glutamine + ATP + H2O = L-asparaginyl-tRNA(Asn) + L-glutamate + ADP + phosphate + 2 H(+). Allows the formation of correctly charged Asn-tRNA(Asn) or Gln-tRNA(Gln) through the transamidation of misacylated Asp-tRNA(Asn) or Glu-tRNA(Gln) in organisms which lack either or both of asparaginyl-tRNA or glutaminyl-tRNA synthetases. The reaction takes place in the presence of glutamine and ATP through an activated phospho-Asp-tRNA(Asn) or phospho-Glu-tRNA(Gln). The sequence is that of Aspartyl/glutamyl-tRNA(Asn/Gln) amidotransferase subunit B from Burkholderia pseudomallei (strain K96243).